Here is a 198-residue protein sequence, read N- to C-terminus: MSKRRYLTGKEVQAMMQAVCYGATGARDYCLILLAYRHGMRISELLDLHYQDLDLNEGRINIRRLKNGFSTVHPLRFDEREAVERWTQERANWKGADRTDAIFISRRGSRLSRQQAYRIIRDAGIEAGTVTQTHPHMLRHACGYELAERGADTRLIQDYLGHRNIRHTVRYTASNAARFAGLWERNNLINEKLKREEV.

Residues 2-184 enclose the Tyr recombinase domain; it reads SKRRYLTGKE…NAARFAGLWE (183 aa). Catalysis depends on residues Arg-41, Lys-66, His-136, Arg-139, and His-162. The O-(3'-phospho-DNA)-tyrosine intermediate role is filled by Tyr-171.

The protein belongs to the 'phage' integrase family.

FimE is one of the 2 regulatory proteins which control the phase variation of type 1 fimbriae in E.coli. These proteins mediate the periodic inversion of a 300bp DNA segment that harbors the promoter for the fimbrial structural gene, fimA. FimE switches fimA off. The sequence is that of Type 1 fimbriae regulatory protein FimE (fimE) from Escherichia coli O6:H1 (strain CFT073 / ATCC 700928 / UPEC).